Here is a 280-residue protein sequence, read N- to C-terminus: Putative transcription factor kapC (280 aa).

The interval M1–R102 is disordered. The segment covering P39–M49 has biased composition (pro residues). Residues T79–P89 show a composition bias toward polar residues. The bZIP domain occupies P96–L159. Residues L97 to H120 are basic motif. Residues L124–L155 form a leucine-zipper region. The segment at L169 to S280 is disordered. Residues A197–P206 show a composition bias toward pro residues.

The protein belongs to the bZIP family.

It is found in the nucleus. Its function is as follows. Putative transcription factor. This is Putative transcription factor kapC (kapC) from Aspergillus fumigatus (strain ATCC MYA-4609 / CBS 101355 / FGSC A1100 / Af293) (Neosartorya fumigata).